We begin with the raw amino-acid sequence, 206 residues long: Sortase A (206 aa).

Over 1 to 6 (MKKWTN) the chain is Cytoplasmic. Residues 7 to 24 (RLMTIAGVVLILVAAYLF) traverse the membrane as a helical segment. Residues 25–206 (AKPHIDNYLH…RKIFVATEVK (182 aa)) lie on the Extracellular side of the membrane. Positions 49-69 (VKEQASKDKKQQAKPQIPKDK) are disordered. The Ca(2+) site is built by glutamate 105, glutamate 108, aspartate 112, and asparagine 114. The active-site Proton donor/acceptor is the histidine 120. Glutamate 171 is a binding site for Ca(2+). The active-site Acyl-thioester intermediate is the cysteine 184.

The protein belongs to the bacterial sortase family. Class A subfamily. In terms of assembly, monomer and homodimer; in equilibrium.

It is found in the cell membrane. It carries out the reaction The enzyme catalyzes a cell wall sorting reaction in which a surface protein with a sorting signal containing a LPXTG motif is cleaved between the Thr and Gly residue. The resulting threonine carboxyl end of the protein is covalently attached to a pentaglycine cross-bridge of peptidoglycan.. Its activity is regulated as follows. Sortase activity is regulated by monomer-homodimer equilibrium. Mutant cells with monomeric SrtA display more adhesive proteins on the cell surface and are more invasive than wild-type cells, which have majority of SrtA in dimeric form. Dimerization may suppress the enzymatic activity on cell membranes. Stimulated by calcium ions, which promote substrate binding. Calcium ions bind to SrtA and modulate both the structure and dynamics of a large active site loop. Can also be stimulated, to a lesser extent, by Mg(2+) and Mn(2+). Inhibited by sulfhydryl-modifying reagents. Functionally, transpeptidase that anchors surface proteins to the cell wall. Recognizes and modifies its substrate by proteolytic cleavage of a C-terminal sorting signal. Following cleavage, a covalent intermediate is formed via a thioester bond between the sortase and its substrate, which is then transferred and covalently attached to the cell wall. This sortase recognizes a Leu-Pro-x-Thr-Gly (LPXTG) motif, which is cleaved by the sortase between the threonine and glycine residues. Utilizes lipid II as the peptidoglycan substrate for the sorting reaction. Responsible for the display of important virulence factors. Important for interactions with the host and host colonization during infection. This chain is Sortase A, found in Staphylococcus aureus (strain NCTC 8325 / PS 47).